Consider the following 359-residue polypeptide: DNA replication and repair protein RecF (359 aa).

30-37 (GPNGSGKT) serves as a coordination point for ATP.

This sequence belongs to the RecF family.

The protein resides in the cytoplasm. Its function is as follows. The RecF protein is involved in DNA metabolism; it is required for DNA replication and normal SOS inducibility. RecF binds preferentially to single-stranded, linear DNA. It also seems to bind ATP. This chain is DNA replication and repair protein RecF, found in Aliivibrio salmonicida (strain LFI1238) (Vibrio salmonicida (strain LFI1238)).